The primary structure comprises 435 residues: Citrate synthase (435 aa).

Active-site residues include histidine 311 and aspartate 370.

Belongs to the citrate synthase family.

The enzyme catalyses oxaloacetate + acetyl-CoA + H2O = citrate + CoA + H(+). It participates in carbohydrate metabolism; tricarboxylic acid cycle; isocitrate from oxaloacetate: step 1/2. The polypeptide is Citrate synthase (gltA) (Rickettsia bellii (strain RML369-C)).